The chain runs to 577 residues: ATP-dependent zinc metalloprotease FtsH (577 aa).

The Cytoplasmic portion of the chain corresponds to 1–3 (MKK). Residues 4–24 (LYWIILIAVVLACSGILMSLH) form a helical membrane-spanning segment. Residues 25–98 (LSVTKEEMTY…IKVDNSDSYS (74 aa)) are Extracellular-facing. Residues 99-119 (ATKVIQIILIITVGTGVFLFI) form a helical membrane-spanning segment. Over 120-577 (RTSGGKDKPL…IDRICLKEAV (458 aa)) the chain is Cytoplasmic. 186-193 (GPPGTGKT) is a binding site for ATP. His-409 is a binding site for Zn(2+). The active site involves Glu-410. The Zn(2+) site is built by His-413 and Asp-487.

It in the central section; belongs to the AAA ATPase family. The protein in the C-terminal section; belongs to the peptidase M41 family. In terms of assembly, homohexamer. The cofactor is Zn(2+).

The protein localises to the cell membrane. In terms of biological role, acts as a processive, ATP-dependent zinc metallopeptidase for both cytoplasmic and membrane proteins. Plays a role in the quality control of integral membrane proteins. The polypeptide is ATP-dependent zinc metalloprotease FtsH (Lachnoclostridium phytofermentans (strain ATCC 700394 / DSM 18823 / ISDg) (Clostridium phytofermentans)).